Here is a 613-residue protein sequence, read N- to C-terminus: V-type proton ATPase catalytic subunit A isoform 1 (613 aa).

240–247 (GAFGCGKT) is a binding site for ATP.

This sequence belongs to the ATPase alpha/beta chains family. In terms of assembly, V-ATPase is a heteromultimeric enzyme composed of a peripheral catalytic V1 complex (main components: subunits A, B, C, D, E, and F) attached to an integral membrane V0 proton pore complex (main component: the proteolipid protein).

It catalyses the reaction ATP + H2O + 4 H(+)(in) = ADP + phosphate + 5 H(+)(out). In terms of biological role, catalytic subunit of the peripheral V1 complex of vacuolar ATPase. V-ATPase vacuolar ATPase is responsible for acidifying a variety of intracellular compartments in eukaryotic cells. This is V-type proton ATPase catalytic subunit A isoform 1 from Acetabularia acetabulum (Mermaid's wine glass).